The chain runs to 243 residues: Uridylate kinase (243 aa).

Residue 12 to 15 coordinates ATP; it reads KLSG. The involved in allosteric activation by GTP stretch occupies residues 20-25; the sequence is GAKGFG. 2 residues coordinate ATP: G55 and R59. UMP is bound by residues D74 and 135 to 142; that span reads TGNPYFTT. Q163, Y169, and D172 together coordinate ATP.

The protein belongs to the UMP kinase family. As to quaternary structure, homohexamer.

The protein resides in the cytoplasm. The catalysed reaction is UMP + ATP = UDP + ADP. It participates in pyrimidine metabolism; CTP biosynthesis via de novo pathway; UDP from UMP (UMPK route): step 1/1. With respect to regulation, allosterically activated by GTP. Inhibited by UTP. In terms of biological role, catalyzes the reversible phosphorylation of UMP to UDP. In Symbiobacterium thermophilum (strain DSM 24528 / JCM 14929 / IAM 14863 / T), this protein is Uridylate kinase.